Reading from the N-terminus, the 240-residue chain is Ribosomal RNA small subunit methyltransferase G (240 aa).

S-adenosyl-L-methionine is bound by residues Gly-79, Phe-84, Ala-130 to Glu-131, and Arg-149.

The protein belongs to the methyltransferase superfamily. RNA methyltransferase RsmG family.

It localises to the cytoplasm. Specifically methylates the N7 position of a guanine in 16S rRNA. The polypeptide is Ribosomal RNA small subunit methyltransferase G (Desulforamulus reducens (strain ATCC BAA-1160 / DSM 100696 / MI-1) (Desulfotomaculum reducens)).